The primary structure comprises 284 residues: MEMO1 family protein LS215_2219 (284 aa).

This sequence belongs to the MEMO1 family.

The protein is MEMO1 family protein LS215_2219 of Saccharolobus islandicus (strain L.S.2.15 / Lassen #1) (Sulfolobus islandicus).